The sequence spans 155 residues: SsrA-binding protein (155 aa).

The protein belongs to the SmpB family.

It localises to the cytoplasm. Required for rescue of stalled ribosomes mediated by trans-translation. Binds to transfer-messenger RNA (tmRNA), required for stable association of tmRNA with ribosomes. tmRNA and SmpB together mimic tRNA shape, replacing the anticodon stem-loop with SmpB. tmRNA is encoded by the ssrA gene; the 2 termini fold to resemble tRNA(Ala) and it encodes a 'tag peptide', a short internal open reading frame. During trans-translation Ala-aminoacylated tmRNA acts like a tRNA, entering the A-site of stalled ribosomes, displacing the stalled mRNA. The ribosome then switches to translate the ORF on the tmRNA; the nascent peptide is terminated with the 'tag peptide' encoded by the tmRNA and targeted for degradation. The ribosome is freed to recommence translation, which seems to be the essential function of trans-translation. The chain is SsrA-binding protein from Geobacillus kaustophilus (strain HTA426).